Here is a 375-residue protein sequence, read N- to C-terminus: DNA replication and repair protein RecF (375 aa).

Residue 30–37 (GENAQGKT) coordinates ATP.

It belongs to the RecF family.

It localises to the cytoplasm. In terms of biological role, the RecF protein is involved in DNA metabolism; it is required for DNA replication and normal SOS inducibility. RecF binds preferentially to single-stranded, linear DNA. It also seems to bind ATP. In Bacillus cereus (strain B4264), this protein is DNA replication and repair protein RecF.